A 523-amino-acid polypeptide reads, in one-letter code: Major facilitator-type transporter psiT2 (523 aa).

Positions 1–26 are enriched in polar residues; the sequence is MSLERSTSPNPTERTSLLSDTASTIS. Residues 1-45 form a disordered region; the sequence is MSLERSTSPNPTERTSLLSDTASTISSRDDVEQSSLKQRRTPIPT. Transmembrane regions (helical) follow at residues 88–108, 125–145, 149–169, 175–195, and 221–241; these read FYSGLIESVFACGEVCSIFML, ALGIAVFTALFGLSSSFTMML, VCAGLLAGATPIVHSIVSELT, ALVVPLYGLITPIGFAIGPLI, and FLPSFVPCCMAIVGVTFGYFF. An N-linked (GlcNAc...) asparagine glycan is attached at asparagine 269. Transmembrane regions (helical) follow at residues 317-337, 352-372, and 382-402; these read FLMFLYTSSDVIFSLYCFTAV, AFSVAGLIAMLMQLCITPWVL, and HFCMCSFPLVFALMGCLNPLA. Residue asparagine 410 is glycosylated (N-linked (GlcNAc...) asparagine). 3 consecutive transmembrane segments (helical) span residues 419–439, 455–474, and 488–508; these read GLLYAAIAILLLLARVCVMAF, LATANGLVQVAMTLARAFCP, and NILGGHFWVVVMVFISLVGVW.

The protein belongs to the major facilitator superfamily. TCR/Tet family.

It is found in the membrane. Major facilitator-type transporter; part of the gene cluster that mediates the biosynthesis of psilocybin, a psychotropic tryptamine-derived natural product. In Psilocybe cubensis (Psychedelic mushroom), this protein is Major facilitator-type transporter psiT2.